Here is a 175-residue protein sequence, read N- to C-terminus: NADH-ubiquinone oxidoreductase chain 6 (175 aa).

A run of 5 helical transmembrane segments spans residues 1-21, 25-45, 47-67, 88-108, and 149-169; these read MMLY…VGFS, SPIY…GIVL, FGGS…MMVV, AVLG…YYVL, and YGTW…VVIM.

It belongs to the complex I subunit 6 family. As to quaternary structure, core subunit of respiratory chain NADH dehydrogenase (Complex I) which is composed of 45 different subunits.

The protein resides in the mitochondrion inner membrane. The catalysed reaction is a ubiquinone + NADH + 5 H(+)(in) = a ubiquinol + NAD(+) + 4 H(+)(out). Its function is as follows. Core subunit of the mitochondrial membrane respiratory chain NADH dehydrogenase (Complex I) which catalyzes electron transfer from NADH through the respiratory chain, using ubiquinone as an electron acceptor. Essential for the catalytic activity and assembly of complex I. This is NADH-ubiquinone oxidoreductase chain 6 (MT-ND6) from Bos indicus (Zebu).